The chain runs to 271 residues: Aspartate/glutamate leucyltransferase (271 aa).

Belongs to the R-transferase family. Bpt subfamily.

It is found in the cytoplasm. It catalyses the reaction N-terminal L-glutamyl-[protein] + L-leucyl-tRNA(Leu) = N-terminal L-leucyl-L-glutamyl-[protein] + tRNA(Leu) + H(+). The catalysed reaction is N-terminal L-aspartyl-[protein] + L-leucyl-tRNA(Leu) = N-terminal L-leucyl-L-aspartyl-[protein] + tRNA(Leu) + H(+). Functionally, functions in the N-end rule pathway of protein degradation where it conjugates Leu from its aminoacyl-tRNA to the N-termini of proteins containing an N-terminal aspartate or glutamate. The chain is Aspartate/glutamate leucyltransferase from Acinetobacter baumannii (strain SDF).